We begin with the raw amino-acid sequence, 230 residues long: AA9 family lytic polysaccharide monooxygenase H (230 aa).

The signal sequence occupies residues 1–17; it reads MKTLSAGLLALASAASA. Cu(2+) contacts are provided by His-18 and His-89. The cysteines at positions 59 and 178 are disulfide-linked. O2 is bound by residues His-164 and Gln-173. Tyr-175 is a binding site for Cu(2+).

This sequence belongs to the polysaccharide monooxygenase AA9 family. Requires Cu(2+) as cofactor.

Its subcellular location is the secreted. It carries out the reaction [(1-&gt;4)-beta-D-glucosyl]n+m + reduced acceptor + O2 = 4-dehydro-beta-D-glucosyl-[(1-&gt;4)-beta-D-glucosyl]n-1 + [(1-&gt;4)-beta-D-glucosyl]m + acceptor + H2O.. In terms of biological role, lytic polysaccharide monooxygenase (LPMO) that depolymerizes crystalline and amorphous polysaccharides via the oxidation of scissile alpha- or beta-(1-4)-glycosidic bonds, yielding primarly C1 oxidation products. Catalysis by LPMOs requires the reduction of the active-site copper from Cu(II) to Cu(I) by a reducing agent and H(2)O(2) or O(2) as a cosubstrate. Active on hemicelluloses, including xylan, glucomannan, and xyloglucan. Preferentially cleaves residual xylan in phosphoric acid-swollen cellulose (PASC). Moreover, when exposed to cellulose-xylan blends, shows a preference for xylan and for releasing oxidized xylooligosaccharides. Has no activity on ivory nut mannan (INM), a linear beta-1,4-linked mannan without substitutions. This is AA9 family lytic polysaccharide monooxygenase H from Malbranchea cinnamomea (Thermophilic fungus).